We begin with the raw amino-acid sequence, 131 residues long: MSKKTDDILDSLKTLSLLEASELVKQIEDAFGVSAAASAGVVVAAGGAAGGGAAAEAAEEQTEFDVVLESFDASAKIKVLKAVREATGLGLGDAKAMVEAAPKTIKEGIAKNDAEALKKAIEEVGGKVSLK.

This sequence belongs to the bacterial ribosomal protein bL12 family. In terms of assembly, homodimer. Part of the ribosomal stalk of the 50S ribosomal subunit. Forms a multimeric L10(L12)X complex, where L10 forms an elongated spine to which 2 to 4 L12 dimers bind in a sequential fashion. Binds GTP-bound translation factors.

In terms of biological role, forms part of the ribosomal stalk which helps the ribosome interact with GTP-bound translation factors. Is thus essential for accurate translation. The protein is Large ribosomal subunit protein bL12 of Prochlorococcus marinus (strain MIT 9313).